The sequence spans 159 residues: Olfactory receptor-like protein COR8 (159 aa).

Over 1 to 16 the chain is Cytoplasmic; sequence VAICNPLLYTISMPKS. The chain crosses the membrane as a helical span at residues 17–41; sequence LCMKLVAGSYLGGVLNSLTQTCCLL. At 42–82 the chain is on the extracellular side; the sequence is PLPFCGPNVINHYFCDTNPLLKLTCSDGRLNELLLVTFNGT. A glycan (N-linked (GlcNAc...) asparagine) is linked at Asn-80. Residues 83-103 traverse the membrane as a helical segment; sequence ISMTVLLIIVISYVYILVSIL. Residues 104–116 lie on the Cytoplasmic side of the membrane; the sequence is SIRSARGRHKAFS. Residues 117 to 137 traverse the membrane as a helical segment; it reads TCASHLLTVTLFYVPAGLSHM. Residues 138–148 are Extracellular-facing; the sequence is QPGSKYSLDME. A helical transmembrane segment spans residues 149–159; sequence KVTAVFYTLLV.

Belongs to the G-protein coupled receptor 1 family.

The protein localises to the cell membrane. Odorant receptor. This is Olfactory receptor-like protein COR8 (COR8) from Gallus gallus (Chicken).